The following is an 811-amino-acid chain: MSSATSLVPPAAPDMREHELGECAAFYAAETPQRLFENLLHLENALKARGYDTDSAGAPALGPTTLTMEAIADRITLIINRFKAAVRLDLELYRLLAELVHIRIRTKTVSMQAWIELRGLSRECAEFILERKNFVCELMERFGEVYPTLSRVGLQSARKFESMYLGKLKNGRLESVGQFFLRIAAEAARGVANNDAFAAAVFRDGTRAPDANTVFCLFFMALCRQEIVPPTPVMLFAGTESRSYASCFLLDVRGRHTRDVLTSIAEEIIPVMHSHGGIGLYMDCDSNWDDNSSGMMLALKALDSIIAASNAVSARPSGLCVYVEPWHRDIMKILRCRGVLAGNEETRCDNTFFALWMPDLFMKRFEANGTWTLFDGRAAHLSDLYGEEFEKEYELLERKNVGIATYPARDVMFALIKSAVSTGTPFVMFKHAVNRNYFFDMAGRAMKCSNLCTEIVHMTDDESVGVCNLTSLNLAAFVTRRNALPGTPPIGTFDYSSFRDACAVATVFINALMSLSNLPIKRATTGNERLRSIGIGVQGFHTACLLQGFGLDSVEACRFNGKLFEALALTTFQTSCRICELGMNPFRGFSESKYAKGWLHMDGWPARHLYFDGWDRLRENIKAYGLYNCQLVALMPTASSSQLTEVSEGIHPVFGNIFSKITTTGEDIQLNVALMETIECLYPNKAERRDILERLHKNKWSTRGAFGAALPSQHPLTKFDTAFEADQEHLLRLSADRAPFVDHSQSTTLYVVEEDDGAVRASRVAHLLTTAFKYGLKTGMYYCKVRKATDNGVFLGTDTCRRDDPTCLACQ.

Substrate-binding positions include Thr-231, 246-247 (SC), Gly-277, 450-454 (NLCTE), and 636-640 (PTASS). Residues Cys-247 and Cys-467 are joined by a disulfide bond. Asn-450 (proton acceptor) is an active-site residue. Cys-452 acts as the Cysteine radical intermediate in catalysis. Glu-454 functions as the Proton acceptor in the catalytic mechanism.

It belongs to the ribonucleoside diphosphate reductase large chain family. Heterotetramer composed of a homodimer of the large subunit (R1) and a homodimer of the small subunit (R2). Larger multisubunit protein complex are also active, composed of (R1)n(R2)n.

The catalysed reaction is a 2'-deoxyribonucleoside 5'-diphosphate + [thioredoxin]-disulfide + H2O = a ribonucleoside 5'-diphosphate + [thioredoxin]-dithiol. In terms of biological role, ribonucleoside-diphosphate reductase holoenzyme provides the precursors necessary for viral DNA synthesis. Allows virus growth in non-dividing cells, as well as reactivation from latency in infected hosts. Catalyzes the biosynthesis of deoxyribonucleotides from the corresponding ribonucleotides. The protein is Ribonucleoside-diphosphate reductase large subunit of Amazona oratrix (yellow-headed parrot).